The primary structure comprises 1133 residues: Protein cordon-bleu (1133 aa).

Residues 1-11 are compositionally biased toward pro residues; it reads MKARAPPPPGK. The interval 1–25 is disordered; sequence MKARAPPPPGKPAAQNVHSEQKLPH. Residues S31, S34, S196, S219, S256, and S278 each carry the phosphoserine modification. Disordered stretches follow at residues 246-393 and 442-568; these read AEHL…SVNG and QGGI…GQAS. The segment covering 272–301 has biased composition (polar residues); that stretch reads CVTTPNSPSLHSRSLTLGPSLSLGNISGMS. A KKRRAP 1 motif is present at residues 307-312; the sequence is KKRRAP. Phosphoserine is present on residues S330 and S333. Residues 340–345 carry the KKRRAP 2 motif; sequence KKRRAP. Residues 345–358 are compositionally biased toward pro residues; that stretch reads PAPPPPQPPPPSPV. Phosphoserine is present on S356. A compositionally biased stretch (basic and acidic residues) spans 361 to 371; it reads NRKEDKEENRK. Polar residues-rich tracts occupy residues 382 to 393 and 442 to 464; these read TDTSSLTSSVNG and QGGI…QPFI. S447 bears the Phosphoserine mark. Residues 512 to 524 are compositionally biased toward basic and acidic residues; that stretch reads STDDPKAKDKDKM. A Phosphoserine modification is found at S614. A disordered region spans residues 664-720; sequence APSTTITATSEKPQRDETKAGFTLTTPEQQPASQEYGAPPEEDRSRPHSAVSCPVKV. Polar residues-rich tracts occupy residues 665-674 and 686-696; these read PSTTITATSE and TLTTPEQQPAS. Position 924 is a phosphoserine (S924). Disordered stretches follow at residues 942-961 and 990-1018; these read PSPL…SSIF and HTSG…YVEA. 2 consecutive WH2 domains span residues 981–1001 and 1021–1041; these read LHSA…LRKT and ERSA…LRKV. Positions 993-1010 are enriched in basic and acidic residues; the sequence is GGRDKLRKTAEQASEGRP. Residues 1063 to 1091 form a disordered region; sequence DKPQQEDRGLPPPPALPPPSTPASQVPSA. Over residues 1072–1083 the composition is skewed to pro residues; sequence LPPPPALPPPST. At S1099 the chain carries Phosphoserine. The 21-residue stretch at 1109–1129 folds into the WH2 3 domain; it reads ARQALMDAIRSGTGAARLRKV.

Identified in a complex composed of ACTA1, COBL, GSN AND TMSB4X. Identified in a complex composed of COBL, PACSIN1 and WASL. Interacts with PACSIN1, PACSIN2 and PACSIN3. Interacts (via WH2 domains) with actin monomers. Interacts with both PACSIN1 and DBNL. In terms of tissue distribution, detected in brain (at protein level).

The protein localises to the cell membrane. The protein resides in the cytoplasm. It is found in the cytoskeleton. Its subcellular location is the cell projection. It localises to the ruffle. The protein localises to the cytosol. Functionally, plays an important role in the reorganization of the actin cytoskeleton. Binds to and sequesters actin monomers (G actin). Nucleates actin polymerization by assembling three actin monomers in cross-filament orientation and thereby promotes growth of actin filaments at the barbed end. Can also mediate actin depolymerization at barbed ends and severing of actin filaments. Promotes formation of cell ruffles. Regulates dendrite branching in Purkinje cells. Regulates neuron morphogenesis and increases branching of axons and dendrites. The protein is Protein cordon-bleu (Cobl) of Rattus norvegicus (Rat).